The following is a 200-amino-acid chain: MVHITTVMIIIGAYLIGSIPFGFLLAYFWKGIDIRKCGSGNIGATNVWRTLGKVPGMIVLILDMIKGISAVLLAKQLENTDIAVLGVALAVMAGHSWPLWLRFKGGKIIATGAGAILALSPMPLLLAFLVWLTTVVVSRYVSLGSILGAVSLPIWMALLNQNRHYLIFSVLVASFAVWKHSSNIGRLIKGTEFKIGQKKT.

The next 6 helical transmembrane spans lie at 9 to 29 (IIIGAYLIGSIPFGFLLAYFW), 54 to 74 (VPGMIVLILDMIKGISAVLLA), 81 to 101 (DIAVLGVALAVMAGHSWPLWL), 112 to 132 (GAGAILALSPMPLLLAFLVWL), 140 to 160 (YVSLGSILGAVSLPIWMALLN), and 165 to 185 (YLIFSVLVASFAVWKHSSNIG).

This sequence belongs to the PlsY family. Probably interacts with PlsX.

The protein localises to the cell membrane. It catalyses the reaction an acyl phosphate + sn-glycerol 3-phosphate = a 1-acyl-sn-glycero-3-phosphate + phosphate. The protein operates within lipid metabolism; phospholipid metabolism. Functionally, catalyzes the transfer of an acyl group from acyl-phosphate (acyl-PO(4)) to glycerol-3-phosphate (G3P) to form lysophosphatidic acid (LPA). This enzyme utilizes acyl-phosphate as fatty acyl donor, but not acyl-CoA or acyl-ACP. This chain is Glycerol-3-phosphate acyltransferase, found in Desulforamulus reducens (strain ATCC BAA-1160 / DSM 100696 / MI-1) (Desulfotomaculum reducens).